We begin with the raw amino-acid sequence, 517 residues long: Methionine aminopeptidase 1b (517 aa).

The interval 74–94 is disordered; that stretch reads YCNKENSNNNNNNNNNNNNNL. Residues 79 to 94 are compositionally biased toward low complexity; that stretch reads NSNNNNNNNNNNNNNL. The segment at 114-166 adopts a C6H2-type zinc-finger fold; that stretch reads ENLCSGCKKVLIKKLSCPICLKNKIFSYFCNQECFKGSWKEHQKIHENMNKEN. Positions 117, 120, 130, 133, 143, 147, 155, and 159 each coordinate Zn(2+). His325 lines the a protein pocket. Residues Asp342, Asp353, and His419 each coordinate Zn(2+). His426 provides a ligand contact to a protein. Zn(2+)-binding residues include Glu452 and Glu483.

The protein belongs to the peptidase M24A family. Methionine aminopeptidase type 1 subfamily. As to quaternary structure, associates with the 60S ribosomal subunit of the 80S translational complex. Requires Zn(2+) as cofactor. Co(2+) serves as cofactor. Mn(2+) is required as a cofactor. It depends on Fe(2+) as a cofactor.

Its subcellular location is the cytoplasm. It carries out the reaction Release of N-terminal amino acids, preferentially methionine, from peptides and arylamides.. Its activity is regulated as follows. Inhibited by pyrimidine derivative XC11. Its function is as follows. Cotranslationally removes the N-terminal methionine from nascent proteins. The N-terminal methionine is often cleaved when the second residue in the primary sequence is small and uncharged (Met-Ala-, Cys, Gly, Pro, Ser, Thr, or Val). May play an important role in parasite growth during the blood asexual stage. In Plasmodium falciparum (isolate 3D7), this protein is Methionine aminopeptidase 1b.